We begin with the raw amino-acid sequence, 147 residues long: Augurin (147 aa).

The N-terminal stretch at 1-31 is a signal peptide; the sequence is MANSSARPAFLVMTALALLLLLCVGPGGISG. 2 propeptides span residues 32-68 and 132-147; these read NKLK…LRRP and SAHS…YDDY.

Belongs to the augurin family.

It localises to the secreted. Its subcellular location is the cytoplasm. The protein localises to the apical cell membrane. Functionally, probable hormone that may attenuate cell proliferation and induce senescence of oligodendrocyte and neural precursor cells in the central nervous system. ECRG4-induced senescence is characterized by G1 arrest, RB1 dephosphorylation and accelerated CCND1 and CCND3 proteasomal degradation. The sequence is that of Augurin from Bos taurus (Bovine).